The primary structure comprises 316 residues: Annexin D5 (316 aa).

Alanine 2 carries the N-acetylalanine modification. 4 Annexin repeats span residues 11-82 (PSPR…LWMP), 83-154 (EAVE…AYLN), 166-238 (ASVE…TILQ), and 242-313 (NSCF…SLLG). Ca(2+) is bound by residues phenylalanine 24, glycine 26, glycine 28, and glutamate 68. Serine 95 is modified (phosphoserine). Phosphothreonine is present on threonine 112. Residue glycine 259 coordinates Ca(2+). Tyrosine 284 carries the post-translational modification Phosphotyrosine. The Ca(2+) site is built by aspartate 299 and threonine 300.

Belongs to the annexin (TC 1.A.31.1) family. Expressed mainly in roots and flowers. Lower in stems and leaves.

The chain is Annexin D5 (ANN5) from Arabidopsis thaliana (Mouse-ear cress).